Here is a 454-residue protein sequence, read N- to C-terminus: CCA-adding enzyme (454 aa).

The ATP site is built by Ser59 and Arg62. Positions 59 and 62 each coordinate CTP. Asp71, Asp73, and Asp125 together coordinate Mg(2+). Residues His148, Lys167, and Tyr176 each coordinate ATP. Residues His148, Lys167, and Tyr176 each contribute to the CTP site.

The protein belongs to the tRNA nucleotidyltransferase/poly(A) polymerase family. Archaeal CCA-adding enzyme subfamily. As to quaternary structure, homodimer. The cofactor is Mg(2+).

It carries out the reaction a tRNA precursor + 2 CTP + ATP = a tRNA with a 3' CCA end + 3 diphosphate. The catalysed reaction is a tRNA with a 3' CCA end + 2 CTP + ATP = a tRNA with a 3' CCACCA end + 3 diphosphate. Catalyzes the addition and repair of the essential 3'-terminal CCA sequence in tRNAs without using a nucleic acid template. Adds these three nucleotides in the order of C, C, and A to the tRNA nucleotide-73, using CTP and ATP as substrates and producing inorganic pyrophosphate. tRNA 3'-terminal CCA addition is required both for tRNA processing and repair. Also involved in tRNA surveillance by mediating tandem CCA addition to generate a CCACCA at the 3' terminus of unstable tRNAs. While stable tRNAs receive only 3'-terminal CCA, unstable tRNAs are marked with CCACCA and rapidly degraded. The polypeptide is CCA-adding enzyme (Methanosarcina barkeri (strain Fusaro / DSM 804)).